We begin with the raw amino-acid sequence, 88 residues long: Small ribosomal subunit protein uS15 (88 aa).

It belongs to the universal ribosomal protein uS15 family. In terms of assembly, part of the 30S ribosomal subunit. Forms a bridge to the 50S subunit in the 70S ribosome, contacting the 23S rRNA.

Functionally, one of the primary rRNA binding proteins, it binds directly to 16S rRNA where it helps nucleate assembly of the platform of the 30S subunit by binding and bridging several RNA helices of the 16S rRNA. In terms of biological role, forms an intersubunit bridge (bridge B4) with the 23S rRNA of the 50S subunit in the ribosome. This Psychrobacter arcticus (strain DSM 17307 / VKM B-2377 / 273-4) protein is Small ribosomal subunit protein uS15.